Here is a 3317-residue protein sequence, read N- to C-terminus: Cadherin-23 (3317 aa).

Positions 1–23 are cleaved as a signal peptide; the sequence is MRHPPVTWCAMLWLLMLVSGSWG. Over 24–3062 the chain is Extracellular; sequence QVNRLPFFTN…SVQLPDDMSA (3039 aa). Cadherin domains lie at 34-132, 133-236, 237-348, 349-458, 459-559, 560-669, 670-782, 777-888, 889-993, 994-1100, 1101-1206, 1208-1311, 1312-1416, 1418-1525, 1527-1632, 1633-1742, 1743-1849, 1850-1957, 1958-2067, 2068-2172, 2173-2291, 2295-2400, 2401-2507, 2508-2609, 2612-2720, 2727-2844, and 2845-2973; these read HFFD…APTF, HNQP…DPIF, INLP…APEF, NSSE…RPIF, SQPL…VPTF, QKDA…PPTF, SKPA…APYY, KDAP…DPTF, QNLP…TPTF, FPAV…RPIF, LQSS…APVF, QQQY…AVQF, SNAS…SPRF, FTSD…PPVI, SPFG…APVF, QQPH…VPTF, PRDY…DPVL, LNLP…HPLF, TEGT…WPTF, SPPA…RPEF, LNPI…TPQF, GITY…NPIF, DQLS…RPQF, SKPQ…RPVF, PPNG…EPLF, SPQY…PPRF, and TKAE…EEEF. N-linked (GlcNAc...) asparagine glycosylation is found at Asn-155 and Asn-206. N-linked (GlcNAc...) asparagine glycans are attached at residues Asn-349, Asn-391, Asn-432, Asn-464, Asn-470, Asn-600, Asn-692, Asn-763, Asn-808, Asn-825, Asn-939, Asn-999, Asn-1016, Asn-1169, Asn-1280, Asn-1313, Asn-1471, Asn-1532, Asn-1649, Asn-1665, Asn-1816, Asn-1855, Asn-1887, Asn-1900, Asn-2012, Asn-2048, Asn-2127, Asn-2166, Asn-2193, Asn-2261, Asn-2355, and Asn-2367. 8 N-linked (GlcNAc...) asparagine glycosylation sites follow: Asn-2576, Asn-2614, Asn-2747, Asn-2806, Asn-2875, Asn-2894, Asn-2939, and Asn-2979. The helical transmembrane segment at 3063-3083 threads the bilayer; it reads LQMAIIVLAILLFLAAMLFVL. Residues 3084–3317 lie on the Cytoplasmic side of the membrane; sequence MNWYYRTIHK…MESPLEITEL (234 aa).

In terms of assembly, antiparallel heterodimer with PCDH15. Interacts with USH1C and USH1G.

The protein resides in the cell membrane. Functionally, cadherins are calcium-dependent cell adhesion proteins. They preferentially interact with themselves in a homophilic manner in connecting cells. CDH23 is required for establishing and/or maintaining the proper organization of the stereocilia bundle of hair cells in the cochlea and the vestibule during late embryonic/early postnatal development. It is part of the functional network formed by USH1C, USH1G, CDH23 and MYO7A that mediates mechanotransduction in cochlear hair cells. Required for normal hearing. The polypeptide is Cadherin-23 (Cdh23) (Rattus norvegicus (Rat)).